The chain runs to 169 residues: Cuticle protein 21 (169 aa).

6 consecutive repeat copies span residues 21-24, 27-30, 33-36, 39-42, 47-50, and 53-56. Residues 65 to 135 enclose the Chitin-binding type R&amp;R domain; sequence NPQYSYAYNV…KEAGAHPAPV (71 aa). 3 repeat units span residues 140 to 143, 146 to 149, and 160 to 163.

In terms of biological role, component of the cuticle of migratory locust which contains more than 100 different structural proteins. This chain is Cuticle protein 21 (ACP21), found in Locusta migratoria (Migratory locust).